A 445-amino-acid chain; its full sequence is Bifunctional protein GlmU (445 aa).

The tract at residues 1–218 (MRALVLAAGK…LLEITGVNTR (218 aa)) is pyrophosphorylase. UDP-N-acetyl-alpha-D-glucosamine contacts are provided by residues 6–9 (LAAG), Lys20, Gln69, 74–75 (GT), 96–98 (YGD), Gly134, Glu147, Asn162, and Asn216. Asp98 contacts Mg(2+). Residue Asn216 participates in Mg(2+) binding. Residues 219–239 (KTLVWLEEQLRMRKIEELLEN) form a linker region. The N-acetyltransferase stretch occupies residues 240–445 (GVTILDPATT…GWVLKKRKEE (206 aa)). Positions 321 and 339 each coordinate UDP-N-acetyl-alpha-D-glucosamine. The Proton acceptor role is filled by His351. Residues Tyr354 and Asn365 each contribute to the UDP-N-acetyl-alpha-D-glucosamine site. Residues Ala368, 374–375 (NY), Ser393, Ala411, and Arg428 contribute to the acetyl-CoA site.

The protein in the N-terminal section; belongs to the N-acetylglucosamine-1-phosphate uridyltransferase family. In the C-terminal section; belongs to the transferase hexapeptide repeat family. Homotrimer. Requires Mg(2+) as cofactor.

It localises to the cytoplasm. It catalyses the reaction alpha-D-glucosamine 1-phosphate + acetyl-CoA = N-acetyl-alpha-D-glucosamine 1-phosphate + CoA + H(+). The catalysed reaction is N-acetyl-alpha-D-glucosamine 1-phosphate + UTP + H(+) = UDP-N-acetyl-alpha-D-glucosamine + diphosphate. It functions in the pathway nucleotide-sugar biosynthesis; UDP-N-acetyl-alpha-D-glucosamine biosynthesis; N-acetyl-alpha-D-glucosamine 1-phosphate from alpha-D-glucosamine 6-phosphate (route II): step 2/2. The protein operates within nucleotide-sugar biosynthesis; UDP-N-acetyl-alpha-D-glucosamine biosynthesis; UDP-N-acetyl-alpha-D-glucosamine from N-acetyl-alpha-D-glucosamine 1-phosphate: step 1/1. Its pathway is bacterial outer membrane biogenesis; LPS lipid A biosynthesis. Functionally, catalyzes the last two sequential reactions in the de novo biosynthetic pathway for UDP-N-acetylglucosamine (UDP-GlcNAc). The C-terminal domain catalyzes the transfer of acetyl group from acetyl coenzyme A to glucosamine-1-phosphate (GlcN-1-P) to produce N-acetylglucosamine-1-phosphate (GlcNAc-1-P), which is converted into UDP-GlcNAc by the transfer of uridine 5-monophosphate (from uridine 5-triphosphate), a reaction catalyzed by the N-terminal domain. The protein is Bifunctional protein GlmU of Thermotoga maritima (strain ATCC 43589 / DSM 3109 / JCM 10099 / NBRC 100826 / MSB8).